A 488-amino-acid polypeptide reads, in one-letter code: Ribulose bisphosphate carboxylase large chain 2 (488 aa).

Residues asparagine 128 and threonine 178 each contribute to the substrate site. The active-site Proton acceptor is lysine 180. Lysine 182 serves as a coordination point for substrate. Positions 206, 208, and 209 each coordinate Mg(2+). Lysine 206 is modified (N6-carboxylysine). The active-site Proton acceptor is the histidine 298. Residues arginine 299, histidine 331, and serine 383 each contribute to the substrate site.

It belongs to the RuBisCO large chain family. Type I subfamily. Heterohexadecamer of 8 large chains and 8 small chains. The cofactor is Mg(2+).

The catalysed reaction is 2 (2R)-3-phosphoglycerate + 2 H(+) = D-ribulose 1,5-bisphosphate + CO2 + H2O. It carries out the reaction D-ribulose 1,5-bisphosphate + O2 = 2-phosphoglycolate + (2R)-3-phosphoglycerate + 2 H(+). RuBisCO catalyzes two reactions: the carboxylation of D-ribulose 1,5-bisphosphate, the primary event in carbon dioxide fixation, as well as the oxidative fragmentation of the pentose substrate. Both reactions occur simultaneously and in competition at the same active site. This chain is Ribulose bisphosphate carboxylase large chain 2, found in Nitrobacter hamburgensis (strain DSM 10229 / NCIMB 13809 / X14).